The sequence spans 511 residues: Maturase K (511 aa).

It belongs to the intron maturase 2 family. MatK subfamily.

The protein resides in the plastid. Its subcellular location is the chloroplast. Functionally, usually encoded in the trnK tRNA gene intron. Probably assists in splicing its own and other chloroplast group II introns. This chain is Maturase K, found in Anchomanes difformis (Amorphophallus difformis).